Here is a 274-residue protein sequence, read N- to C-terminus: 2,3,4,5-tetrahydropyridine-2,6-dicarboxylate N-succinyltransferase (274 aa).

Substrate-binding residues include R106 and D143.

This sequence belongs to the transferase hexapeptide repeat family. As to quaternary structure, homotrimer.

It localises to the cytoplasm. It catalyses the reaction (S)-2,3,4,5-tetrahydrodipicolinate + succinyl-CoA + H2O = (S)-2-succinylamino-6-oxoheptanedioate + CoA. The protein operates within amino-acid biosynthesis; L-lysine biosynthesis via DAP pathway; LL-2,6-diaminopimelate from (S)-tetrahydrodipicolinate (succinylase route): step 1/3. The sequence is that of 2,3,4,5-tetrahydropyridine-2,6-dicarboxylate N-succinyltransferase from Cupriavidus metallidurans (strain ATCC 43123 / DSM 2839 / NBRC 102507 / CH34) (Ralstonia metallidurans).